Reading from the N-terminus, the 647-residue chain is Pre-mRNA-splicing factor SLU7 (647 aa).

Residues 1-19 (MASYKQNLPPSALIKQQVN) show a composition bias toward polar residues. Positions 1-44 (MASYKQNLPPSALIKQQVNVADKKSKAEVQRDRQLEEDRKAGTA) are disordered. Over residues 21-41 (ADKKSKAEVQRDRQLEEDRKA) the composition is skewed to basic and acidic residues. A CCHC-type zinc finger spans residues 113–130 (GACENCGAMGHQKRDCFD). 2 disordered regions span residues 193-212 (HEMKEGEVEPATTEDGAPKD) and 465-620 (EVKE…KEME). Residues 465–479 (EVKEEKEKEDSIKDE) are compositionally biased toward basic and acidic residues. Residues 480-491 (VAEENSDNDNDE) show a composition bias toward acidic residues. Positions 513–533 (EKEREKERLIEKERRERDQRR) are enriched in basic and acidic residues. The span at 534 to 555 (RDKKREKRERKKAKLGKRKRRH) shows a compositional bias: basic residues. Over residues 588 to 606 (EKAEGMKAAREGDRGRKYN) the composition is skewed to basic and acidic residues.

The protein belongs to the SLU7 family.

The protein localises to the nucleus. In terms of biological role, participates in the second catalytic step of pre-mRNA splicing, when the free hydroxyl group of exon I attacks the 3'-splice site to generate spliced mRNA and the excised lariat intron. In Caenorhabditis elegans, this protein is Pre-mRNA-splicing factor SLU7.